Consider the following 715-residue polypeptide: Protein MTSS 2 (715 aa).

The IMD domain occupies 1–249 (METAEKECGA…EQVIKDLKGS (249 aa)). A coiled-coil region spans residues 134–156 (HEIKKKSSDTLKLQKKARKGKGD). 3 stretches are compositionally biased toward low complexity: residues 253–274 (WSYQTPPSSPSSSNSRKSSMCS), 284–295 (SSVSSHDSGFVS), and 312–330 (TSQKSSSSASSEASETCQS). Disordered regions lie at residues 253 to 405 (WSYQ…EVSP), 420 to 485 (LEHQ…RNSN), and 527 to 562 (IRRTPSTKPTVRRALSSAGPIPIRPPIVPVKTPTVP). Residue Thr-257 is modified to Phosphothreonine. At Ser-261 the chain carries Phosphoserine. A compositionally biased stretch (polar residues) spans 331–341 (VSECSSPTSDW). Positions 360-369 (DRVEHLRDTE) are enriched in basic and acidic residues. Ser-404 bears the Phosphoserine mark. Residues 429–442 (SLQYSSGYSTQTTT) are compositionally biased toward low complexity. A compositionally biased stretch (polar residues) spans 443–455 (PSCSEDTIPSQGS). Ser-542, Ser-564, Ser-575, Ser-587, Ser-597, and Ser-602 each carry phosphoserine. Thr-606 is modified (phosphothreonine). The segment at 661 to 690 (FPFPTALSATPSEETPTPPPAATSDPPAED) is disordered. In terms of domain architecture, WH2 spans 687–704 (PAEDMLVAIRRGVRLRRT).

This sequence belongs to the MTSS family. Interacts (via IMD domain) with RAC1; this interaction may be important to potentiate PDGF-induced RAC1 activation.

The protein localises to the cytoplasm. It localises to the cell projection. The protein resides in the ruffle. In terms of biological role, involved in plasma membrane dynamics. Potentiated PDGF-mediated formation of membrane ruffles and lamellipodia in fibroblasts, acting via RAC1 activation. May function in actin bundling. The polypeptide is Protein MTSS 2 (Mtss2) (Mus musculus (Mouse)).